Consider the following 65-residue polypeptide: uncharacterized protein (65 aa).

To E.coli YjiX.

This is an uncharacterized protein from Escherichia coli O6:H1 (strain CFT073 / ATCC 700928 / UPEC).